A 2118-amino-acid chain; its full sequence is Cilia- and flagella-associated protein 65 (2118 aa).

The chain crosses the membrane as a helical span at residues 6–26 (GSLRALLLAAAAAAAAAAGAV). The region spanning 615 to 736 (FLHSNPEFGP…HTPRLTTDLP (122 aa)) is the MSP domain. Disordered regions lie at residues 1007–1029 (APLL…LDAG), 1764–1909 (SGGS…DDFA), and 1924–1958 (AGGG…APPR). The segment covering 1825–1834 (GGAGGAPGGD) has biased composition (gly residues). A compositionally biased stretch (low complexity) spans 1840–1849 (RPGTPSMTAA). The span at 1850 to 1859 (AHHHHHHPRH) shows a compositional bias: basic residues. Low complexity-rich tracts occupy residues 1892 to 1902 (SISGAPDPDSA) and 1936 to 1949 (PGGS…ELAP). Residues 2016–2045 (AVRAAAEAARAEAEARAAAEAATKAAAEAE) adopt a coiled-coil conformation.

It belongs to the CFAP65 family.

The protein resides in the cell projection. It is found in the cilium. Its subcellular location is the flagellum membrane. The protein localises to the cytoplasm. In terms of biological role, may play a role in flagellar formation and mobility. The sequence is that of Cilia- and flagella-associated protein 65 from Chlamydomonas reinhardtii (Chlamydomonas smithii).